A 642-amino-acid polypeptide reads, in one-letter code: Threonine--tRNA ligase (642 aa).

Positions 1-61 constitute a TGS domain; sequence MPVITLPDGS…ETDSTLSIIT (61 aa). Positions 243–534 are catalytic; sequence DHRKIGKQLD…LTEEFAGFFP (292 aa). The Zn(2+) site is built by Cys-334, His-385, and His-511.

This sequence belongs to the class-II aminoacyl-tRNA synthetase family. Homodimer. Zn(2+) is required as a cofactor.

Its subcellular location is the cytoplasm. The enzyme catalyses tRNA(Thr) + L-threonine + ATP = L-threonyl-tRNA(Thr) + AMP + diphosphate + H(+). Catalyzes the attachment of threonine to tRNA(Thr) in a two-step reaction: L-threonine is first activated by ATP to form Thr-AMP and then transferred to the acceptor end of tRNA(Thr). Also edits incorrectly charged L-seryl-tRNA(Thr). In Klebsiella pneumoniae (strain 342), this protein is Threonine--tRNA ligase.